Consider the following 314-residue polypeptide: Melanoma-associated antigen 6 (314 aa).

Residues 1 to 20 are compositionally biased toward basic and acidic residues; it reads MPLEQRSQHCKPEEGLEARG. The interval 1 to 99 is disordered; sequence MPLEQRSQHC…QEEEGPSTFP (99 aa). Residues 21–44 show a composition bias toward low complexity; the sequence is EALGLVGAQAPATEEQEAASSSST. Residues 65-87 are compositionally biased toward polar residues; sequence PQGASSLPTTMNYPLWSQSYEDS. Positions 109 to 308 constitute an MAGE domain; that stretch reads LSRKVAKLVH…ISYPLLHEWA (200 aa).

In terms of assembly, interacts with TRIM28. Post-translationally, ubiquitinated by the DCX(DCAF12) complex specifically recognizes the diglutamate (Glu-Glu) at the C-terminus, leading to its degradation. In terms of tissue distribution, expressed in many tumors of several types, such as melanoma, head and neck squamous cell carcinoma, lung carcinoma and breast carcinoma, but not in normal tissues except for testes.

In terms of biological role, activator of ubiquitin ligase activity of RING-type zinc finger-containing E3 ubiquitin-protein ligases that acts as a repressor of autophagy. May enhance ubiquitin ligase activity of TRIM28 and stimulate p53/TP53 ubiquitination by TRIM28. Proposed to act through recruitment and/or stabilization of the Ubl-conjugating enzyme (E2) at the E3:substrate complex. May play a role in tumor transformation or aspects of tumor progression. In vitro promotes cell viability in melanoma cell lines. The protein is Melanoma-associated antigen 6 of Homo sapiens (Human).